Here is a 241-residue protein sequence, read N- to C-terminus: Tetraspanin-1 (241 aa).

The next 3 helical transmembrane spans lie at 12-32 (ILFN…GIWV), 53-73 (FVNV…LGFL), and 89-109 (FFSI…VALV). An N-linked (GlcNAc...) asparagine glycan is attached at asparagine 154. A helical membrane pass occupies residues 212-232 (AVTVGGVAVGVAALELAAMVV).

It belongs to the tetraspanin (TM4SF) family. Interacts with SLC19A2. Interacts with NTRK1/TRKA.

The protein localises to the cell membrane. It is found in the lysosome membrane. Structural component of specialized membrane microdomains known as tetraspanin-enriched microdomains (TERMs), which act as platforms for receptor clustering and signaling. Participates thereby in diverse biological functions such as cell signal transduction, adhesion, migration and protein trafficking. Regulates neuronal differentiation in response to NGF by facilitating NGF-mediated activation of NTRK1/TRKA receptor tyrosine kinase and subsequent downstream signaling pathways. Plays a role in the inhibition of TNFalpha-induced apoptosis. Mechanistically, inhibits the NF-kappa-B signaling pathway by blocking phosphorylation of CHUK. Also promotes the stability of the thiamine transporter 1/SLC19A2 in intestinal epithelial cells leading to an increase of thiamine uptake process. This Rattus norvegicus (Rat) protein is Tetraspanin-1 (Tspan1).